Reading from the N-terminus, the 895-residue chain is Clathrin interactor EPSIN 2 (895 aa).

Residues K18–R150 form the ENTH domain. Basic and acidic residues-rich tracts occupy residues R150 to R161, D177 to S236, and R245 to S257. The tract at residues R150–T396 is disordered. 2 positions are modified to phosphoserine: S270 and S282. Residues A329–T348 show a composition bias toward low complexity. Composition is skewed to polar residues over residues F349–V358 and P387–T396. The Clathrin binding motif lies at L409–F413. Disordered regions lie at residues A436–Q533 and K758–G784. The segment covering P440–D454 has biased composition (low complexity). Positions D454–F456 match the ALPHA-ADR binding motif. Polar residues-rich tracts occupy residues F464 to A479, P515 to Q533, and Q759 to N769.

This sequence belongs to the epsin family. In terms of assembly, interacts with clathrin, VTI12, DELTA-ADR and ALPHA-ADR.

It localises to the golgi apparatus. The protein resides in the cytoplasmic vesicle. Its subcellular location is the clathrin-coated vesicle. May have a role in transport via clathrin-coated vesicles from the trans-Golgi network to endosomes. Stimulates clathrin assembly. Binds to membranes enriched in phosphatidylinositol 3-phosphate (PtdIns(3)P). Plays an important role in protein trafficking. The protein is Clathrin interactor EPSIN 2 (EPSIN2) of Arabidopsis thaliana (Mouse-ear cress).